The following is a 395-amino-acid chain: Crh-like protein 5 (395 aa).

Residues 1–19 (MYFKYTAAALAAVLPLCSA) form the signal peptide. C25 and C32 form a disulfide bridge. The 186-residue stretch at 45–230 (ADFTSASALD…WAGGLTDYSA (186 aa)) folds into the GH16 domain. Catalysis depends on E119, which acts as the Nucleophile. E123 functions as the Proton donor in the catalytic mechanism. E123, R203, W207, and T218 together coordinate chitin. Residues 271–374 (ISSSSSVTSS…PELSQGAAGS (104 aa)) are disordered. Low complexity-rich tracts occupy residues 272–338 (SSSS…SNTG) and 348–364 (GSSS…ASAT). N319 carries an N-linked (GlcNAc...) asparagine glycan. G370 carries the GPI-like-anchor amidated glycine lipid modification. Positions 371-395 (AAGSIKGSVTACALVFGAVAAVLAF) are cleaved as a propeptide — removed in mature form.

This sequence belongs to the glycosyl hydrolase 16 family. CRH1 subfamily. The GPI-like anchor contains a phosphoceramide lipid group. The anchor position has not been determined.

It localises to the cell membrane. It is found in the secreted. The protein resides in the cell wall. The catalysed reaction is Random endo-hydrolysis of N-acetyl-beta-D-glucosaminide (1-&gt;4)-beta-linkages in chitin and chitodextrins.. Its function is as follows. Dual chitinase/transglycosylase that plays a role in cell wall architecture. Chitinase and transglycosylase activities are coupled. Required for the polysaccharide cross-linking at the septa and the cell wall. More specifically, transfers chitin to 1,6-beta-glucan in the cell wall. Chr5 shows acceptor substrate promiscuity and is also able to cross-link chitin to chitin. The sequence is that of Crh-like protein 5 from Aspergillus fumigatus (strain ATCC MYA-4609 / CBS 101355 / FGSC A1100 / Af293) (Neosartorya fumigata).